A 200-amino-acid polypeptide reads, in one-letter code: Pyridoxal 5'-phosphate synthase subunit PdxT (200 aa).

Residue 52–54 (GES) participates in L-glutamine binding. Catalysis depends on C84, which acts as the Nucleophile. L-glutamine is bound by residues R116 and 145–146 (IR). Residues H181 and E183 each act as charge relay system in the active site.

This sequence belongs to the glutaminase PdxT/SNO family. In terms of assembly, in the presence of PdxS, forms a dodecamer of heterodimers. Only shows activity in the heterodimer.

It carries out the reaction aldehydo-D-ribose 5-phosphate + D-glyceraldehyde 3-phosphate + L-glutamine = pyridoxal 5'-phosphate + L-glutamate + phosphate + 3 H2O + H(+). The enzyme catalyses L-glutamine + H2O = L-glutamate + NH4(+). Its pathway is cofactor biosynthesis; pyridoxal 5'-phosphate biosynthesis. Catalyzes the hydrolysis of glutamine to glutamate and ammonia as part of the biosynthesis of pyridoxal 5'-phosphate. The resulting ammonia molecule is channeled to the active site of PdxS. This chain is Pyridoxal 5'-phosphate synthase subunit PdxT, found in Sulfolobus acidocaldarius (strain ATCC 33909 / DSM 639 / JCM 8929 / NBRC 15157 / NCIMB 11770).